We begin with the raw amino-acid sequence, 670 residues long: Auxin response factor 16 (670 aa).

The TF-B3 DNA-binding region spans 120–222; that stretch reads FAKTLTQSDA…DLCVGIRRAK (103 aa). The span at 545 to 557 shows a compositional bias: polar residues; that stretch reads KTQISSGGSNQNG. Positions 545-579 are disordered; it reads KTQISSGGSNQNGVAGREFSSSDEGSPCSKKVHDA. Residues 584 to 664 form the PB1 domain; it reads TGHCKVFMES…RRLTILTEQG (81 aa).

This sequence belongs to the ARF family. In terms of assembly, homodimers and heterodimers.

The protein resides in the nucleus. Auxin response factors (ARFs) are transcriptional factors that bind specifically to the DNA sequence 5'-TGTCTC-3' found in the auxin-responsive promoter elements (AuxREs). Could act as transcriptional activator or repressor. Formation of heterodimers with Aux/IAA proteins may alter their ability to modulate early auxin response genes expression. The polypeptide is Auxin response factor 16 (ARF16) (Arabidopsis thaliana (Mouse-ear cress)).